The chain runs to 596 residues: Arginine--tRNA ligase (596 aa).

Positions 123-133 match the 'HIGH' region motif; the sequence is PNTNKPLHLGH.

This sequence belongs to the class-I aminoacyl-tRNA synthetase family. As to quaternary structure, monomer.

It is found in the cytoplasm. The catalysed reaction is tRNA(Arg) + L-arginine + ATP = L-arginyl-tRNA(Arg) + AMP + diphosphate. In Amoebophilus asiaticus (strain 5a2), this protein is Arginine--tRNA ligase.